Reading from the N-terminus, the 661-residue chain is Pentatricopeptide repeat-containing protein At3g04750, mitochondrial (661 aa).

The N-terminal 18 residues, 1 to 18 (MCFVLLLRRGFRLFGTEC), are a transit peptide targeting the mitochondrion. 13 PPR repeats span residues 99–131 (NVFVYNTMISAVSSSKNECFGLYSSMIRHRVSP), 132–163 (DRQTFLYLMKASSFLSEVKQIHCHIIVSGCLS), 165–195 (GNYLWNSLVKFYMELGNFGVAEKVFARMPHP), 196–230 (DVSSFNVMIVGYAKQGFSLEALKLYFKMVSDGIEP), 231–265 (DEYTVLSLLVCCGHLSDIRLGKGVHGWIERRGPVY), 268–298 (NLILSNALLDMYFKCKESGLAKRAFDAMKKK), 299–333 (DMRSWNTMVVGFVRLGDMEAAQAVFDQMPKRDLVS), 334–366 (WNSLLFGYSKKGCDQRTVRELFYEMTIVEKVKP), 367–401 (DRVTMVSLISGAANNGELSHGRWVHGLVIRLQLKG), 402–432 (DAFLSSALIDMYCKCGIIERAFMVFKTATEK), 433–467 (DVALWTSMITGLAFHGNGQQALQLFGRMQEEGVTP), 468–498 (NNVTLLAVLTACSHSGLVEEGLHVFNHMKDK), and 504–539 (ETEHYGSLVDLLCRAGRVEEAKDIVQKKMPMRPSQS). The type E motif stretch occupies residues 540–615 (MWGSILSACR…TAGYSSVVGV (76 aa)). The segment at 616–647 (EGLHRFVAAEKQNHPRWTEIKRILQHLYNEMK) is type E(+) motif.

This sequence belongs to the PPR family. PCMP-E subfamily.

Its subcellular location is the mitochondrion. This is Pentatricopeptide repeat-containing protein At3g04750, mitochondrial (PCMP-E81) from Arabidopsis thaliana (Mouse-ear cress).